Consider the following 1134-residue polypeptide: Translation initiation factor IF-2 (1134 aa).

2 disordered regions span residues 55–465 (AQKS…HIIG) and 491–524 (LARP…QRQR). Composition is skewed to polar residues over residues 56-65 (QKSSNSSSPP), 83-105 (SPPT…SSLK), 137-147 (PSISKNNSLKV), 208-234 (QIKQ…IQTN), and 251-264 (VQSQ…NNNL). Composition is skewed to basic and acidic residues over residues 391-403 (KRGD…KKDG) and 438-450 (PDWD…EALR). Composition is skewed to basic residues over residues 495 to 504 (GKPKASKKSG) and 511 to 524 (LRKR…QRQR). The 173-residue stretch at 626–798 (RRPPVVTVMG…ILLVTEVEDL (173 aa)) folds into the tr-type G domain. The interval 635–642 (GHVDHGKT) is G1. 635-642 (GHVDHGKT) contributes to the GTP binding site. The tract at residues 660-664 (GITQH) is G2. The G3 stretch occupies residues 685-688 (DTPG). GTP-binding positions include 685–689 (DTPGH) and 739–742 (NKID). The interval 739–742 (NKID) is G4. The G5 stretch occupies residues 775–777 (SAI).

Belongs to the TRAFAC class translation factor GTPase superfamily. Classic translation factor GTPase family. IF-2 subfamily.

It is found in the cytoplasm. Its function is as follows. One of the essential components for the initiation of protein synthesis. Protects formylmethionyl-tRNA from spontaneous hydrolysis and promotes its binding to the 30S ribosomal subunits. Also involved in the hydrolysis of GTP during the formation of the 70S ribosomal complex. The protein is Translation initiation factor IF-2 of Prochlorococcus marinus (strain SARG / CCMP1375 / SS120).